The following is a 184-amino-acid chain: Protein Iojap-related, mitochondrial (184 aa).

A mitochondrion-targeting transit peptide spans 1 to 39 (MLTTLRSRCSSLLLNQSWKLAPNRIFASSPSFSSSAGIS).

The protein belongs to the Iojap/RsfS family.

The protein localises to the mitochondrion. In terms of biological role, may be a ribosome silencing factor involved in organelle biogenesis and required for germination. The chain is Protein Iojap-related, mitochondrial from Arabidopsis thaliana (Mouse-ear cress).